A 254-amino-acid polypeptide reads, in one-letter code: Hydroxyacylglutathione hydrolase (254 aa).

Zn(2+)-binding residues include histidine 53, histidine 55, aspartate 57, histidine 58, histidine 111, aspartate 128, and histidine 166.

It belongs to the metallo-beta-lactamase superfamily. Glyoxalase II family. Monomer. Zn(2+) is required as a cofactor.

The catalysed reaction is an S-(2-hydroxyacyl)glutathione + H2O = a 2-hydroxy carboxylate + glutathione + H(+). It participates in secondary metabolite metabolism; methylglyoxal degradation; (R)-lactate from methylglyoxal: step 2/2. Thiolesterase that catalyzes the hydrolysis of S-D-lactoyl-glutathione to form glutathione and D-lactic acid. This is Hydroxyacylglutathione hydrolase from Aeromonas hydrophila subsp. hydrophila (strain ATCC 7966 / DSM 30187 / BCRC 13018 / CCUG 14551 / JCM 1027 / KCTC 2358 / NCIMB 9240 / NCTC 8049).